We begin with the raw amino-acid sequence, 512 residues long: Transactivator/viroplasmin protein (512 aa).

Disordered stretches follow at residues 76-123 and 474-512; these read GNER…NPVA and ADSSSTSGEQNNVEKSCPDSPLTNAYDERSDDHKRIPSI. The segment covering 476 to 487 has biased composition (polar residues); sequence SSSTSGEQNNVE. A compositionally biased stretch (basic and acidic residues) spans 499–512; the sequence is YDERSDDHKRIPSI.

This sequence belongs to the caulimoviridae viroplasmin family.

Its subcellular location is the host cytoplasm. Functionally, enhances the translation of downstream ORFs on polycistronic mRNAs derived from figwort mosaic virus. This Figwort mosaic virus (strain DxS) (FMV) protein is Transactivator/viroplasmin protein.